The chain runs to 103 residues: ATP-dependent Clp protease adapter protein ClpS (103 aa).

This sequence belongs to the ClpS family. As to quaternary structure, binds to the N-terminal domain of the chaperone ClpA.

Functionally, involved in the modulation of the specificity of the ClpAP-mediated ATP-dependent protein degradation. The sequence is that of ATP-dependent Clp protease adapter protein ClpS from Neisseria meningitidis serogroup A / serotype 4A (strain DSM 15465 / Z2491).